A 150-amino-acid chain; its full sequence is MKIARHAKILEIISEKEIETQEELAAELQKQGIDVTQATVSRDIKELRLIKVLTEDGKRYKYAPMGKVDGHITDRLMTLLSESIVSVDYAGNIIVIKTLSGTAPAAAEAIDTLNWKNIVGTLAGDNTIFVLVRNEEALQELLEKFKKLVK.

Belongs to the ArgR family.

The protein resides in the cytoplasm. The protein operates within amino-acid biosynthesis; L-arginine biosynthesis [regulation]. In terms of biological role, regulates arginine biosynthesis genes. In Thermoanaerobacter sp. (strain X514), this protein is Arginine repressor.